A 238-amino-acid polypeptide reads, in one-letter code: NADH-quinone oxidoreductase subunit C (238 aa).

The disordered stretch occupies residues 1–20 (MSSPDQNPSDAAGQTGSSNE).

Belongs to the complex I 30 kDa subunit family. In terms of assembly, NDH-1 is composed of 14 different subunits. Subunits NuoB, C, D, E, F, and G constitute the peripheral sector of the complex.

It localises to the cell membrane. The catalysed reaction is a quinone + NADH + 5 H(+)(in) = a quinol + NAD(+) + 4 H(+)(out). NDH-1 shuttles electrons from NADH, via FMN and iron-sulfur (Fe-S) centers, to quinones in the respiratory chain. The immediate electron acceptor for the enzyme in this species is believed to be a menaquinone. Couples the redox reaction to proton translocation (for every two electrons transferred, four hydrogen ions are translocated across the cytoplasmic membrane), and thus conserves the redox energy in a proton gradient. This chain is NADH-quinone oxidoreductase subunit C, found in Mycobacterium ulcerans (strain Agy99).